The following is a 64-amino-acid chain: Large ribosomal subunit protein bL35 (64 aa).

The protein belongs to the bacterial ribosomal protein bL35 family.

This chain is Large ribosomal subunit protein bL35, found in Shewanella loihica (strain ATCC BAA-1088 / PV-4).